The chain runs to 585 residues: Putative phospholipase B-like 2 (585 aa).

The signal sequence occupies residues 1–35; sequence MAAPMDRTHGGRAARALRRALALASLAGLLLSGLA. N-linked (GlcNAc...) asparagine glycans are attached at residues asparagine 84, asparagine 102, and asparagine 106. A disulfide bridge links cysteine 138 with cysteine 148. 2 N-linked (GlcNAc...) asparagine glycosylation sites follow: asparagine 227 and asparagine 432. Cysteine 488 and cysteine 491 are disulfide-bonded. Asparagine 511 is a glycosylation site (N-linked (GlcNAc...) asparagine).

It belongs to the phospholipase B-like family. As to quaternary structure, interacts with IGF2R. In terms of processing, glycosylated; contains mannose 6-phosphate sugars.

It localises to the lysosome lumen. Its function is as follows. Putative phospholipase. The protein is Putative phospholipase B-like 2 (Plbd2) of Rattus norvegicus (Rat).